Consider the following 318-residue polypeptide: Ribosomal RNA small subunit methyltransferase H (318 aa).

S-adenosyl-L-methionine-binding positions include 37–39, Asp56, Tyr83, Asp104, and Gln111; that span reads GGH. The tract at residues 293–318 is disordered; that stretch reads EEEIAENRRAAPARLRGAQRIREDAE.

The protein belongs to the methyltransferase superfamily. RsmH family.

Its subcellular location is the cytoplasm. The catalysed reaction is cytidine(1402) in 16S rRNA + S-adenosyl-L-methionine = N(4)-methylcytidine(1402) in 16S rRNA + S-adenosyl-L-homocysteine + H(+). In terms of biological role, specifically methylates the N4 position of cytidine in position 1402 (C1402) of 16S rRNA. The polypeptide is Ribosomal RNA small subunit methyltransferase H (Streptomyces avermitilis (strain ATCC 31267 / DSM 46492 / JCM 5070 / NBRC 14893 / NCIMB 12804 / NRRL 8165 / MA-4680)).